Consider the following 417-residue polypeptide: Spermidine/putrescine import ATP-binding protein PotA (417 aa).

Residues I5–V308 form the ABC transporter domain. ATP is bound at residue G37–T44. The interval D105 to K177 is insert.

It belongs to the ABC transporter superfamily. Spermidine/putrescine importer (TC 3.A.1.11.1) family. The complex is composed of two ATP-binding proteins (PotA), two transmembrane proteins (PotB and PotC) and a solute-binding protein (PotD).

It is found in the cell membrane. The catalysed reaction is ATP + H2O + polyamine-[polyamine-binding protein]Side 1 = ADP + phosphate + polyamineSide 2 + [polyamine-binding protein]Side 1.. Part of the ABC transporter complex PotABCD involved in spermidine/putrescine import. Responsible for energy coupling to the transport system. The polypeptide is Spermidine/putrescine import ATP-binding protein PotA (Onion yellows phytoplasma (strain OY-M)).